The primary structure comprises 245 residues: Ribonuclease 3 (245 aa).

Positions phenylalanine 19–glycine 148 constitute an RNase III domain. Mg(2+) is bound at residue glutamate 61. Aspartate 65 is a catalytic residue. 2 residues coordinate Mg(2+): aspartate 134 and glutamate 137. Residue glutamate 137 is part of the active site. Positions aspartate 174–glutamate 243 constitute a DRBM domain.

Belongs to the ribonuclease III family. In terms of assembly, homodimer. Mg(2+) serves as cofactor.

It localises to the cytoplasm. The catalysed reaction is Endonucleolytic cleavage to 5'-phosphomonoester.. Its function is as follows. Digests double-stranded RNA. Involved in the processing of primary rRNA transcript to yield the immediate precursors to the large and small rRNAs (23S and 16S). Processes some mRNAs, and tRNAs when they are encoded in the rRNA operon. Processes pre-crRNA and tracrRNA of type II CRISPR loci if present in the organism. In Bacillus cereus (strain 03BB102), this protein is Ribonuclease 3.